Reading from the N-terminus, the 107-residue chain is SOSS complex subunit C (107 aa).

Belongs to the SOSS-C family. Belongs to the multiprotein complex Integrator. Component of the SOSS complex, composed of soss-b (soss-b1/nabp2 or soss-b2/nabp1), soss-a/ints3 and soss-c/inip.

The protein localises to the nucleus. Functionally, component of the SOSS complex, a multiprotein complex that functions downstream of the MRN complex to promote DNA repair and G2/M checkpoint. The SOSS complex associates with single-stranded DNA at DNA lesions and influences diverse endpoints in the cellular DNA damage response including cell-cycle checkpoint activation, recombinational repair and maintenance of genomic stability. Required for efficient homologous recombination-dependent repair of double-strand breaks (DSBs). In Salmo salar (Atlantic salmon), this protein is SOSS complex subunit C (inip).